The sequence spans 305 residues: MVTEFIFLGLSDSQELQTFLFMLFFVFYGGIVFGNLLIVITVVSDSHLHSPMYFLLANLSLIDLSLSSVTAPKMITDFFSQRKVISFKGCLVQIFLLHFFGGSEMVILIAMGFDRYIAICKPLHYTTIMCGNACVGIMAVAWGIGFLHSVSQLAFAVHLPFCGPNEVDSFYCDLPRVIKLACTDTYRLDIMVIANSGVLTVCSFVLLIISYTIILMTIQHCPLDKSSKALSTLTAHITVVLLFFGPCVFIYAWPFPIKSLDKFLAVFYSVITPLLNPIIYTLRNKDMKTAIRRLRKWDAHSSVKF.

At 1-18 the chain is on the extracellular side; that stretch reads MVTEFIFLGLSDSQELQT. The helical transmembrane segment at 19 to 42 threads the bilayer; that stretch reads FLFMLFFVFYGGIVFGNLLIVITV. At 43-50 the chain is on the cytoplasmic side; it reads VSDSHLHS. Residues 51–72 traverse the membrane as a helical segment; the sequence is PMYFLLANLSLIDLSLSSVTAP. Topologically, residues 73-93 are extracellular; the sequence is KMITDFFSQRKVISFKGCLVQ. Cys90 and Cys182 are oxidised to a cystine. The helical transmembrane segment at 94-113 threads the bilayer; the sequence is IFLLHFFGGSEMVILIAMGF. Residues 114-132 are Cytoplasmic-facing; that stretch reads DRYIAICKPLHYTTIMCGN. Residues 133 to 151 traverse the membrane as a helical segment; it reads ACVGIMAVAWGIGFLHSVS. The Extracellular segment spans residues 152–188; that stretch reads QLAFAVHLPFCGPNEVDSFYCDLPRVIKLACTDTYRL. Residues 189 to 212 traverse the membrane as a helical segment; that stretch reads DIMVIANSGVLTVCSFVLLIISYT. The Cytoplasmic portion of the chain corresponds to 213–228; sequence IILMTIQHCPLDKSSK. The helical transmembrane segment at 229–251 threads the bilayer; sequence ALSTLTAHITVVLLFFGPCVFIY. Residues 252–262 are Extracellular-facing; the sequence is AWPFPIKSLDK. A helical transmembrane segment spans residues 263–282; that stretch reads FLAVFYSVITPLLNPIIYTL. Over 283–305 the chain is Cytoplasmic; that stretch reads RNKDMKTAIRRLRKWDAHSSVKF.

Belongs to the G-protein coupled receptor 1 family.

It is found in the cell membrane. In terms of biological role, odorant receptor. The chain is Olfactory receptor 4F4 (OR4F4) from Homo sapiens (Human).